The following is a 191-amino-acid chain: Putative glutathione-dependent formaldehyde-activating enzyme (191 aa).

Positions 20 to 166 constitute a CENP-V/GFA domain; that stretch reads FPGGNLYCKC…FHSLGLETYD (147 aa). The Zn(2+) site is built by C27, C29, C48, C50, C53, C95, and C98.

It belongs to the Gfa family. Zn(2+) serves as cofactor.

The catalysed reaction is S-(hydroxymethyl)glutathione = glutathione + formaldehyde. The protein operates within one-carbon metabolism; formaldehyde degradation; formate from formaldehyde (glutathione route): step 1/3. Its function is as follows. Catalyzes the condensation of formaldehyde and glutathione to S-hydroxymethylglutathione. The protein is Putative glutathione-dependent formaldehyde-activating enzyme of Aspergillus niger (strain ATCC MYA-4892 / CBS 513.88 / FGSC A1513).